A 366-amino-acid chain; its full sequence is Chorismate synthase (366 aa).

Arginine 48 and arginine 54 together coordinate NADP(+). FMN is bound by residues 125-127 (RSS), 238-239 (NA), glycine 278, 293-297 (KPTSS), and arginine 319.

The protein belongs to the chorismate synthase family. Homotetramer. It depends on FMNH2 as a cofactor.

The enzyme catalyses 5-O-(1-carboxyvinyl)-3-phosphoshikimate = chorismate + phosphate. It functions in the pathway metabolic intermediate biosynthesis; chorismate biosynthesis; chorismate from D-erythrose 4-phosphate and phosphoenolpyruvate: step 7/7. Functionally, catalyzes the anti-1,4-elimination of the C-3 phosphate and the C-6 proR hydrogen from 5-enolpyruvylshikimate-3-phosphate (EPSP) to yield chorismate, which is the branch point compound that serves as the starting substrate for the three terminal pathways of aromatic amino acid biosynthesis. This reaction introduces a second double bond into the aromatic ring system. This is Chorismate synthase from Laribacter hongkongensis (strain HLHK9).